The sequence spans 283 residues: Formamidopyrimidine-DNA glycosylase (283 aa).

Proline 2 acts as the Schiff-base intermediate with DNA in catalysis. Glutamate 3 serves as the catalytic Proton donor. Lysine 58 serves as the catalytic Proton donor; for beta-elimination activity. Residues histidine 100, arginine 119, and arginine 162 each coordinate DNA. The segment at 247–283 (DVYGREGAPCKGEGCTGQIKRIVQSGRSSFYCAQCQR) adopts an FPG-type zinc-finger fold. Arginine 273 (proton donor; for delta-elimination activity) is an active-site residue.

This sequence belongs to the FPG family. In terms of assembly, monomer. Requires Zn(2+) as cofactor.

The catalysed reaction is Hydrolysis of DNA containing ring-opened 7-methylguanine residues, releasing 2,6-diamino-4-hydroxy-5-(N-methyl)formamidopyrimidine.. It carries out the reaction 2'-deoxyribonucleotide-(2'-deoxyribose 5'-phosphate)-2'-deoxyribonucleotide-DNA = a 3'-end 2'-deoxyribonucleotide-(2,3-dehydro-2,3-deoxyribose 5'-phosphate)-DNA + a 5'-end 5'-phospho-2'-deoxyribonucleoside-DNA + H(+). Functionally, involved in base excision repair of DNA damaged by oxidation or by mutagenic agents. Acts as a DNA glycosylase that recognizes and removes damaged bases. Has a preference for oxidized purines, such as 7,8-dihydro-8-oxoguanine (8-oxoG). Has AP (apurinic/apyrimidinic) lyase activity and introduces nicks in the DNA strand. Cleaves the DNA backbone by beta-delta elimination to generate a single-strand break at the site of the removed base with both 3'- and 5'-phosphates. In Roseobacter denitrificans (strain ATCC 33942 / OCh 114) (Erythrobacter sp. (strain OCh 114)), this protein is Formamidopyrimidine-DNA glycosylase.